The chain runs to 462 residues: Alanine racemase (462 aa).

Catalysis depends on lysine 34, which acts as the Proton acceptor; specific for D-alanine. Position 34 is an N6-(pyridoxal phosphate)lysine (lysine 34). A unknown insert region spans residues 73-132 (ASWHESVFRHCEKNYTVIRRSNPVKNSVSQNFFNYFSGLQQCFAPRNDGSSIHATTPKAL). Residue arginine 193 participates in substrate binding. In terms of domain architecture, RPE1 insert spans 286–332 (DLSNNLSYKEEFEGDTERRTAAYINVREDSSTGSTYKLPLEGGYSRG). Tyrosine 357 serves as the catalytic Proton acceptor; specific for L-alanine. Substrate is bound at residue methionine 405.

It belongs to the alanine racemase family. It depends on pyridoxal 5'-phosphate as a cofactor.

The catalysed reaction is L-alanine = D-alanine. It functions in the pathway amino-acid biosynthesis; D-alanine biosynthesis; D-alanine from L-alanine: step 1/1. Its function is as follows. Catalyzes the interconversion of L-alanine and D-alanine. May also act on other amino acids. This is Alanine racemase (alr) from Rickettsia felis (strain ATCC VR-1525 / URRWXCal2) (Rickettsia azadi).